The chain runs to 349 residues: UDP-3-O-acylglucosamine N-acyltransferase 1 (349 aa).

Histidine 241 serves as the catalytic Proton acceptor.

Belongs to the transferase hexapeptide repeat family. LpxD subfamily. As to quaternary structure, homotrimer.

The catalysed reaction is a UDP-3-O-[(3R)-3-hydroxyacyl]-alpha-D-glucosamine + a (3R)-hydroxyacyl-[ACP] = a UDP-2-N,3-O-bis[(3R)-3-hydroxyacyl]-alpha-D-glucosamine + holo-[ACP] + H(+). The protein operates within bacterial outer membrane biogenesis; LPS lipid A biosynthesis. In terms of biological role, catalyzes the N-acylation of UDP-3-O-acylglucosamine using 3-hydroxyacyl-ACP as the acyl donor. Is involved in the biosynthesis of lipid A, a phosphorylated glycolipid that anchors the lipopolysaccharide to the outer membrane of the cell. The polypeptide is UDP-3-O-acylglucosamine N-acyltransferase 1 (Gloeobacter violaceus (strain ATCC 29082 / PCC 7421)).